The chain runs to 129 residues: Virion-associated protein (129 aa).

2 coiled-coil regions span residues 1 to 31 (MANL…ILEL) and 38 to 59 (IKES…LIND). The interval 122–129 (PAGWPNQY) is capsid binding.

This sequence belongs to the caulimovirus ORF III family. In terms of assembly, homotetramer, through coiled-coil domain. Homotrimer when interacts with icosehadral capsid. Interacts with capsid protein, and with Movement protein.

The protein resides in the virion. It is found in the host cell junction. The protein localises to the host plasmodesma. Functionally, plays a role in virus cell-to-cell and plant-to-plant transmission. Interacts with virion icosahedral capsid and movement protein, thereby facilitating virion cell-to-cell transmission through plasmodesmata opened by viral movement protein. Also interacts with aphid transmission factor, attaching the virion to aphid stylet when the animal feeds on an virus infected plant. Aphid saliva may later detach the virion, inducing release of infectious particles when the animal feeds on a new plant. This Cauliflower mosaic virus (strain D/H) (CaMV) protein is Virion-associated protein.